The primary structure comprises 92 residues: Putative septation protein SpoVG (92 aa).

It belongs to the SpoVG family.

In terms of biological role, could be involved in septation. This Thermoanaerobacter sp. (strain X514) protein is Putative septation protein SpoVG.